The following is a 27-amino-acid chain: Allergen C-C (27 aa).

This sequence belongs to the protease inhibitor I6 (cereal trypsin/alpha-amylase inhibitor) family.

The protein localises to the secreted. This Triticum aestivum (Wheat) protein is Allergen C-C.